We begin with the raw amino-acid sequence, 120 residues long: Large ribosomal subunit protein bL20 (120 aa).

Belongs to the bacterial ribosomal protein bL20 family.

In terms of biological role, binds directly to 23S ribosomal RNA and is necessary for the in vitro assembly process of the 50S ribosomal subunit. It is not involved in the protein synthesizing functions of that subunit. This Paracidovorax citrulli (strain AAC00-1) (Acidovorax citrulli) protein is Large ribosomal subunit protein bL20.